We begin with the raw amino-acid sequence, 249 residues long: Putative NAD(+)--arginine ADP-ribosyltransferase Vis (249 aa).

A signal peptide spans 1–18 (MNTRFLLLLCCLSFTTFS). The 193-residue stretch at 31–223 (EEEVTQLAED…IGVETVKASA (193 aa)) folds into the TR mART core domain. NAD(+) is bound by residues 68-80 (SISGYQTANDYLR), 117-120 (RGTW), and E137. R117 is an active-site residue. Residues S142 and E191 contribute to the active site. E191 contacts NAD(+).

It belongs to the Arg-specific ADP-ribosyltransferase family.

Its subcellular location is the secreted. It catalyses the reaction L-arginyl-[protein] + NAD(+) = N(omega)-(ADP-D-ribosyl)-L-arginyl-[protein] + nicotinamide + H(+). A probable mono(ADP-ribosyl)transferase, it may ADP-ribosylate Arg in target protein(s). Upon expression in yeast cells causes cell death. In Vibrio splendidus (strain 12B01), this protein is Putative NAD(+)--arginine ADP-ribosyltransferase Vis.